A 570-amino-acid chain; its full sequence is MAADIFSKFKKDMEVKFAQEFGSNKQTGGDITDKTAKFLRLGPEQDPRKVEMIKAGKEIAEKRGIAFYNPMMHSGAPLGQRAITPYTISGTDIVCEPDDLHYVNNAAMQQMWDDIRRTCIVGLDMAHETLEKRLGKEVTPETINHYLEVLNHAMPGAAVVQEMMVETHPALVDDCYVKVFTGDDALADEIDKQFLIDINKEFSEEQAAQIKASIGKTSWQAIHIPTIVSRTTDGAQTSRWAAMQIGMSFISAYAMCAGEAAVADLSFAAKHAALVSMGEMLPARRARGPNEPGGLSFGHLSDIVQTSRVSEDPAKIALEVVGAGCMLYDQIWLGSYMSGGVGFTQYATAAYTDDILDNNTYYDVDYINDKYNGAATVGKDNKVKASLEVVKDIATESTLYGIETYEKFPTALEDHFGGSQRATVLAAAAGVACSLATGNANAGLSGWYLSMYLHKEAWGRLGFFGFDLQDQCGATNVLSYQGDEGLPDELRGPNYPNYAMNVGHQGGYAGIAQAAHSGRGDAFTVNPLLKVCFADDLLPFNFAEPRREFGRGAIREFVPAGERSLVIPAK.

Position 161 (Gln-161) interacts with coenzyme F430. Coenzyme B is bound by residues Arg-239, Lys-270–His-271, and Arg-284. His-271 is subject to Pros-methylhistidine. Arg-285 is subject to 5-methylarginine. Residues Tyr-346 and Phe-464 each coordinate coenzyme M. Gly-465 carries the 1-thioglycine modification. Asp-470 is subject to (Z)-2,3-didehydroaspartate. At Cys-472 the chain carries S-methylcysteine.

This sequence belongs to the methyl-coenzyme M reductase alpha subunit family. In terms of assembly, MCR is a hexamer of two alpha, two beta, and two gamma chains, forming a dimer of heterotrimers. It depends on coenzyme F430 as a cofactor. Post-translationally, the alpha subunit contains five modified amino acids near the active site region. Is methylated on His-271, Arg-285 and Cys-472, probably by the action of specific S-adenosylmethionine-dependent methyltransferases. Also contains a thioglycine at position 465, forming a thiopeptide bond. Contains a didehydroaspartate residue at position 470. The methylation on C5 of Arg-285 is a post-translational methylation not essential in vivo, but which plays a role for the stability and structural integrity of MCR. Does not show a methylation at Gln-420, as shown for M.marburgensis.

The protein resides in the cytoplasm. The enzyme catalyses coenzyme B + methyl-coenzyme M = methane + coenzyme M-coenzyme B heterodisulfide. The protein operates within one-carbon metabolism; methyl-coenzyme M reduction; methane from methyl-coenzyme M: step 1/1. Its function is as follows. Component of the methyl-coenzyme M reductase (MCR) I that catalyzes the reductive cleavage of methyl-coenzyme M (CoM-S-CH3 or 2-(methylthio)ethanesulfonate) using coenzyme B (CoB or 7-mercaptoheptanoylthreonine phosphate) as reductant which results in the production of methane and the mixed heterodisulfide of CoB and CoM (CoM-S-S-CoB). This is the final step in methanogenesis. The sequence is that of Methyl-coenzyme M reductase subunit alpha (mcrA) from Methanosarcina barkeri (strain Fusaro / DSM 804).